A 158-amino-acid polypeptide reads, in one-letter code: NADH-quinone oxidoreductase subunit B (158 aa).

[4Fe-4S] cluster-binding residues include Cys37, Cys38, Cys102, and Cys132.

Belongs to the complex I 20 kDa subunit family. NDH-1 is composed of 14 different subunits. Subunits NuoB, C, D, E, F, and G constitute the peripheral sector of the complex. [4Fe-4S] cluster is required as a cofactor.

It is found in the cell inner membrane. The catalysed reaction is a quinone + NADH + 5 H(+)(in) = a quinol + NAD(+) + 4 H(+)(out). NDH-1 shuttles electrons from NADH, via FMN and iron-sulfur (Fe-S) centers, to quinones in the respiratory chain. Couples the redox reaction to proton translocation (for every two electrons transferred, four hydrogen ions are translocated across the cytoplasmic membrane), and thus conserves the redox energy in a proton gradient. In Bordetella petrii (strain ATCC BAA-461 / DSM 12804 / CCUG 43448), this protein is NADH-quinone oxidoreductase subunit B.